The primary structure comprises 157 residues: Large ribosomal subunit protein bL17 (157 aa).

The interval A124–E157 is disordered.

This sequence belongs to the bacterial ribosomal protein bL17 family. As to quaternary structure, part of the 50S ribosomal subunit. Contacts protein L32.

The polypeptide is Large ribosomal subunit protein bL17 (Chlorobaculum tepidum (strain ATCC 49652 / DSM 12025 / NBRC 103806 / TLS) (Chlorobium tepidum)).